A 324-amino-acid chain; its full sequence is MQYNPLGKTDLRVSRLCLGCMTFGEPDRGNHAWTLPEESSRPIIKRALEGGINFFDTANSYSDGSSEEIVGRALRDFARREDVVVATKVFHRVGDLPEGLSRAQILRSIDDSLRRLGMDYVDILQIHRWDYNTPIEETLEALNDVVKAGKARYIGASSMHASQFAQALELQKQHGWAQFVSMQDHYNLIYREEEREMLPLCYQEGVAVIPWSPLARGRLTRPWGETTARLVSDEVGKNLYKESDENDAQIAERLTGVSEELGATRAQVALAWLLSKPGIAAPIIGTSREEQLDELLNAVDITLKPEQIAELETPYKPHPVVGFK.

Y61 functions as the Proton donor in the catalytic mechanism.

Belongs to the aldo/keto reductase family. Aldo/keto reductase 2 subfamily.

It carries out the reaction D-ribulose 5-phosphate + AH2 = 1-deoxy-D-xylulose 5-phosphate + A + H2O. With respect to regulation, NADH, NADPH or ATP do not increase activity. In terms of biological role, catalyzes the conversion of ribulose 5-phosphate (Ru5P) to 1-deoxy-D-xylulose 5-phosphate (DXP), providing a direct route from pentoses to terpenes. May play a role in biosynthesis of DXP under conditions of thiamine starvation. This chain is 1-deoxyxylulose-5-phosphate synthase YajO (yajO), found in Escherichia coli (strain K12).